Consider the following 157-residue polypeptide: Thiocyanate hydrolase subunit beta (157 aa).

In terms of assembly, heterododecamer consisting of 4 alpha, 4 beta, and 4 gamma subunits.

It carries out the reaction thiocyanate + H2O + 2 H(+) = carbonyl sulfide + NH4(+). It functions in the pathway organosulfur degradation; thiocyanate degradation. Involved in the degradation of thiocyanate. The polypeptide is Thiocyanate hydrolase subunit beta (scnB) (Thiobacillus thioparus).